The following is a 219-amino-acid chain: MLIAVPLDDTNFSENLKKAKEKGADIVELRVDQFSDTSLNYVKEKLEEVHSQGLKTILTIRSPEEGGREVKNREELFEELSPLSDYTDIELSSRGLLVKLYNITKEAGKKLIISYHNFELTPPNWIIREVLREGYRYGGIPKIAVKANSYEDVARLLCISRQVEGEKILISMGDYGKISRLAGYVFGSVITYCSLEKAFAPGQIPLEEMVELRKKFYRL.

3-dehydroquinate contacts are provided by residues 28–30 (ELR) and Arg61. The active-site Proton donor/acceptor is His116. The active-site Schiff-base intermediate with substrate is Lys142. 2 residues coordinate 3-dehydroquinate: Arg180 and Gln203.

It belongs to the type-I 3-dehydroquinase family. Homodimer.

The enzyme catalyses 3-dehydroquinate = 3-dehydroshikimate + H2O. It participates in metabolic intermediate biosynthesis; chorismate biosynthesis; chorismate from D-erythrose 4-phosphate and phosphoenolpyruvate: step 3/7. Functionally, involved in the third step of the chorismate pathway, which leads to the biosynthesis of aromatic amino acids. Catalyzes the cis-dehydration of 3-dehydroquinate (DHQ) and introduces the first double bond of the aromatic ring to yield 3-dehydroshikimate. The chain is 3-dehydroquinate dehydratase from Aquifex aeolicus (strain VF5).